The chain runs to 164 residues: Glutamate uptake regulatory protein (164 aa).

The HTH asnC-type domain maps to 5–66 (LDDFDIKILD…LLDPQKIGLG (62 aa)). A DNA-binding region (H-T-H motif) is located at residues 24 to 43 (MAELSEKTGLSANACWRRIR).

In terms of biological role, represses the secondary, H(+)-coupled glutamate uptake system (Gluemp) genes. In Zymomonas mobilis subsp. mobilis (strain ATCC 31821 / ZM4 / CP4), this protein is Glutamate uptake regulatory protein (grp).